Reading from the N-terminus, the 500-residue chain is Raftlin-2 (500 aa).

Glycine 2 carries N-myristoyl glycine lipidation. The S-palmitoyl cysteine moiety is linked to residue cysteine 3. A disordered region spans residues 203 to 236 (GHLSESGVEEEPQHESGQHQTERNSSPSYANPKR). Positions 213–224 (EPQHESGQHQTE) are enriched in basic and acidic residues. A Phosphoserine modification is found at serine 404. Residues 406 to 500 (AQTPERKGSR…EEGVTQVTCM (95 aa)) form a disordered region. The residue at position 408 (threonine 408) is a Phosphothreonine. The span at 409 to 424 (PERKGSRLLKGEDRNK) shows a compositional bias: basic and acidic residues. The segment covering 426-438 (SSRSLGLDTNASQ) has biased composition (polar residues). Serine 429 bears the Phosphoserine mark. The span at 467–478 (SDSFSGFSSSDS) shows a compositional bias: low complexity.

This sequence belongs to the raftlin family. In terms of tissue distribution, expressed in B-cells, heart, brain, spleen, large intestine and lung. Expressed in dendritic cells and macrophages.

The protein localises to the cell membrane. Its function is as follows. Upon bacterial lipopolysaccharide stimulation, mediates clathrin-dependent internalization of TLR4 in dendritic cells, resulting in activation of TICAM1-mediated signaling and subsequent IFNB1 production. May regulate B-cell antigen receptor-mediated signaling. The polypeptide is Raftlin-2 (Rftn2) (Mus musculus (Mouse)).